Here is a 129-residue protein sequence, read N- to C-terminus: MAREPQRIKRRERKNITSGIAHVNASFNNTMVTITDAQGNAISWSSAGMMGFKGSRKSTPYAAQVAADDAGKKAAEHGVRTLEVEVKGPGSGRESALRALQAVGFTITAIRDVTPIPHNGVRPSKRRRV.

It belongs to the universal ribosomal protein uS11 family. As to quaternary structure, part of the 30S ribosomal subunit. Interacts with proteins S7 and S18. Binds to IF-3.

In terms of biological role, located on the platform of the 30S subunit, it bridges several disparate RNA helices of the 16S rRNA. Forms part of the Shine-Dalgarno cleft in the 70S ribosome. The chain is Small ribosomal subunit protein uS11 from Novosphingobium aromaticivorans (strain ATCC 700278 / DSM 12444 / CCUG 56034 / CIP 105152 / NBRC 16084 / F199).